Here is a 275-residue protein sequence, read N- to C-terminus: Membrane protein insertase YidC (275 aa).

The signal sequence occupies residues 1–22 (MKKYKRLLLMAGLVTLVFVLSA). The N-palmitoyl cysteine moiety is linked to residue Cys23. Cys23 is lipidated: S-diacylglycerol cysteine. The next 4 membrane-spanning stretches (helical) occupy residues 53-73 (LGGSVGIGIILFTLVIRIILL), 127-147 (YIGCLPLLVQLPIMMALYQAI), 169-189 (YLILPILAAVFTFASTYLSSM), and 206-226 (PAMIFFMGISLASSLSLYWVV). The segment covering 249-266 (EEAARQAKARERALERAK) has biased composition (basic and acidic residues). Positions 249 to 275 (EEAARQAKARERALERAKSPKKKGKKK) are disordered.

It belongs to the OXA1/ALB3/YidC family. Type 2 subfamily.

It is found in the cell membrane. Its function is as follows. Required for the insertion and/or proper folding and/or complex formation of integral membrane proteins into the membrane. Involved in integration of membrane proteins that insert both dependently and independently of the Sec translocase complex, as well as at least some lipoproteins. The polypeptide is Membrane protein insertase YidC (Enterococcus faecalis (strain ATCC 700802 / V583)).